A 417-amino-acid polypeptide reads, in one-letter code: MMPNLSCFSVAISEPTCHDPDSGGHFGGPDGYGGRYVPEALMAVIEEVTAAYEKERVNQDFLDLLDKLQANYAGRPSPLYEATRLSEYAGSVRIFLKREDLNHTGSHKINNVLGQTLLAQRMGKTRVIAETGAGQHGVATATACALFGLDCVIYMGALDTARQALNVARMRLLGAEVVSVETGSRTLKDAINDAFRDWVTNADNTYYCFGTASGPHPFPTMVRDLQRVIGLETRRQIQYQAGRLPDAVTACIGGGSNAIGIFHAFLDDPGVRLVGFEAAGDGVETGRHAATLTGGLPGAFQGTFSYLLQDEDGQTIESHSIAAGLDYPGVGPEHAWLRETGRAEYQPITDSEAIEAFRLLCRTEGILPALESAHAVAGALKLASEIGKGAVIVVNLSGRGDKDIEAAAKWFGLLGTR.

At K108 the chain carries N6-(pyridoxal phosphate)lysine.

Belongs to the TrpB family. As to quaternary structure, tetramer of two alpha and two beta chains. Pyridoxal 5'-phosphate is required as a cofactor.

It carries out the reaction (1S,2R)-1-C-(indol-3-yl)glycerol 3-phosphate + L-serine = D-glyceraldehyde 3-phosphate + L-tryptophan + H2O. It participates in amino-acid biosynthesis; L-tryptophan biosynthesis; L-tryptophan from chorismate: step 5/5. Its function is as follows. The beta subunit is responsible for the synthesis of L-tryptophan from indole and L-serine. The polypeptide is Tryptophan synthase beta chain (trpB) (Mycobacterium leprae (strain TN)).